The following is a 301-amino-acid chain: tRNA pseudouridine synthase B (301 aa).

Residue aspartate 38 is the Nucleophile of the active site.

This sequence belongs to the pseudouridine synthase TruB family. Type 1 subfamily.

It carries out the reaction uridine(55) in tRNA = pseudouridine(55) in tRNA. Its function is as follows. Responsible for synthesis of pseudouridine from uracil-55 in the psi GC loop of transfer RNAs. The sequence is that of tRNA pseudouridine synthase B from Clostridioides difficile (strain 630) (Peptoclostridium difficile).